Consider the following 422-residue polypeptide: Dihydroorotase (422 aa).

Zn(2+) contacts are provided by His-59 and His-61. Residues 61 to 63 (HFR) and Asn-93 each bind substrate. Residues Asp-150, His-177, and His-230 each coordinate Zn(2+). Substrate is bound at residue Asn-276. Zn(2+) is bound at residue Asp-303. The active site involves Asp-303. Substrate is bound at residue His-307.

This sequence belongs to the metallo-dependent hydrolases superfamily. DHOase family. Class I DHOase subfamily. Requires Zn(2+) as cofactor.

It catalyses the reaction (S)-dihydroorotate + H2O = N-carbamoyl-L-aspartate + H(+). It participates in pyrimidine metabolism; UMP biosynthesis via de novo pathway; (S)-dihydroorotate from bicarbonate: step 3/3. Its function is as follows. Catalyzes the reversible cyclization of carbamoyl aspartate to dihydroorotate. This Streptococcus thermophilus (strain CNRZ 1066) protein is Dihydroorotase.